Here is an 83-residue protein sequence, read N- to C-terminus: Conotoxin p21a (83 aa).

A 4-hydroxyproline; partial mark is found at Pro-24 and Pro-43. His-83 is modified (histidine amide).

May form a non-covalent dimer. Post-translationally, contains 5 disulfide bonds. Expressed by the venom duct.

It localises to the secreted. The chain is Conotoxin p21a from Conus purpurascens (Purple cone).